Reading from the N-terminus, the 562-residue chain is Potassium-transporting ATPase potassium-binding subunit (562 aa).

12 helical membrane-spanning segments follow: residues 6-26 (FLLI…LGGF), 62-82 (YALA…VLLM), 132-152 (GLTV…FALI), 175-195 (LYVL…QGVL), 253-273 (FVQM…FGQV), 283-303 (LIWA…YAEL), 327-347 (FGIL…CGAV), 356-376 (ALGG…FGGV), 379-399 (GLYG…LMIG), 416-436 (MTAL…ALAL), 483-503 (LLLA…VLAI), and 524-544 (GLLF…LTFI).

Belongs to the KdpA family. As to quaternary structure, the system is composed of three essential subunits: KdpA, KdpB and KdpC.

It localises to the cell inner membrane. In terms of biological role, part of the high-affinity ATP-driven potassium transport (or Kdp) system, which catalyzes the hydrolysis of ATP coupled with the electrogenic transport of potassium into the cytoplasm. This subunit binds the periplasmic potassium ions and delivers the ions to the membrane domain of KdpB through an intramembrane tunnel. The protein is Potassium-transporting ATPase potassium-binding subunit of Yersinia pestis bv. Antiqua (strain Antiqua).